Consider the following 197-residue polypeptide: DNA-directed RNA polymerases I, II, and III subunit rpabc1 (197 aa).

It belongs to the archaeal Rpo5/eukaryotic RPB5 RNA polymerase subunit family. As to quaternary structure, component of the RNA polymerase I (Pol I), RNA polymerase II (Pol II) and RNA polymerase III (Pol III) complexes consisting of at least 13, 12 and 17 subunits, respectively. In RNA Pol II, this subunit is present in 2-fold molar excess over the other subunits.

Its subcellular location is the nucleus. Functionally, DNA-dependent RNA polymerase catalyzes the transcription of DNA into RNA using the four ribonucleoside triphosphates as substrates. Common component of RNA polymerases I, II and III which synthesize ribosomal RNA precursors, mRNA precursors and many functional non-coding RNAs, and small RNAs, such as 5S rRNA and tRNAs, respectively. Pol II is the central component of the basal RNA polymerase II transcription machinery. Pols are composed of mobile elements that move relative to each other. In Pol II, RPB5 is part of the lower jaw surrounding the central large cleft and thought to grab the incoming DNA template. Seems to be the major component in this process. This chain is DNA-directed RNA polymerases I, II, and III subunit rpabc1 (polr2e), found in Dictyostelium discoideum (Social amoeba).